The sequence spans 520 residues: Anthranilate synthase component 1 (520 aa).

L-tryptophan-binding positions include Ser-40, Lys-50, and 291–293; that span reads PYM. A chorismate-binding site is contributed by 328-329; the sequence is GT. Glu-361 serves as a coordination point for Mg(2+). Residues Tyr-449, Arg-469, 483–485, and Gly-485 contribute to the chorismate site; that span reads GAG. Residue Glu-498 participates in Mg(2+) binding.

It belongs to the anthranilate synthase component I family. In terms of assembly, homodimer. In fact, exists in a monomer-dimer equilibrium in solution, shifted spontaneously in favor of the dimer; the monomer has a reduced activity compared with the dimer. Heterotetramer consisting of two non-identical subunits: a beta subunit (TrpG) and a large alpha subunit (TrpE) (Potential). Mg(2+) serves as cofactor.

The catalysed reaction is chorismate + L-glutamine = anthranilate + pyruvate + L-glutamate + H(+). It functions in the pathway amino-acid biosynthesis; L-tryptophan biosynthesis; L-tryptophan from chorismate: step 1/5. Cooperatively feedback inhibited by tryptophan. Its function is as follows. Part of a heterotetrameric complex that catalyzes the two-step biosynthesis of anthranilate, an intermediate in the biosynthesis of L-tryptophan. In the first step, the glutamine-binding beta subunit (TrpG) of anthranilate synthase (AS) provides the glutamine amidotransferase activity which generates ammonia as a substrate that, along with chorismate, is used in the second step, catalyzed by the large alpha subunit of AS (TrpE) to produce anthranilate. In the absence of TrpG, TrpE can synthesize anthranilate directly from chorismate and high concentrations of ammonia. In Salmonella typhimurium (strain LT2 / SGSC1412 / ATCC 700720), this protein is Anthranilate synthase component 1 (trpE).